The chain runs to 426 residues: Glutamyl-tRNA reductase (426 aa).

Substrate-binding positions include 49-52, Ser101, 106-108, and Gln112; these read TCNR and EPQ. The active-site Nucleophile is the Cys50. 181–186 serves as a coordination point for NADP(+); sequence GAGETI. Residues 404-426 are disordered; that stretch reads DRLFPEKPGLPTSPHSYPDREDR.

This sequence belongs to the glutamyl-tRNA reductase family. Homodimer.

It catalyses the reaction (S)-4-amino-5-oxopentanoate + tRNA(Glu) + NADP(+) = L-glutamyl-tRNA(Glu) + NADPH + H(+). It functions in the pathway porphyrin-containing compound metabolism; protoporphyrin-IX biosynthesis; 5-aminolevulinate from L-glutamyl-tRNA(Glu): step 1/2. Its function is as follows. Catalyzes the NADPH-dependent reduction of glutamyl-tRNA(Glu) to glutamate 1-semialdehyde (GSA). The polypeptide is Glutamyl-tRNA reductase (Xanthomonas campestris pv. phaseoli).